The following is a 328-amino-acid chain: Aspartate carbamoyltransferase catalytic subunit (328 aa).

Carbamoyl phosphate contacts are provided by arginine 55 and threonine 56. Lysine 83 contributes to the L-aspartate binding site. Residues arginine 105, histidine 135, and glutamine 138 each coordinate carbamoyl phosphate. The L-aspartate site is built by arginine 176 and arginine 230. 2 residues coordinate carbamoyl phosphate: glycine 271 and proline 272.

This sequence belongs to the aspartate/ornithine carbamoyltransferase superfamily. ATCase family. As to quaternary structure, heterododecamer (2C3:3R2) of six catalytic PyrB chains organized as two trimers (C3), and six regulatory PyrI chains organized as three dimers (R2).

It catalyses the reaction carbamoyl phosphate + L-aspartate = N-carbamoyl-L-aspartate + phosphate + H(+). Its pathway is pyrimidine metabolism; UMP biosynthesis via de novo pathway; (S)-dihydroorotate from bicarbonate: step 2/3. Catalyzes the condensation of carbamoyl phosphate and aspartate to form carbamoyl aspartate and inorganic phosphate, the committed step in the de novo pyrimidine nucleotide biosynthesis pathway. The polypeptide is Aspartate carbamoyltransferase catalytic subunit (Streptomyces griseus subsp. griseus (strain JCM 4626 / CBS 651.72 / NBRC 13350 / KCC S-0626 / ISP 5235)).